The sequence spans 261 residues: Cytochrome c oxidase subunit 3 (261 aa).

At 1 to 15 (MTHQTHAYHMVNPSP) the chain is on the mitochondrial matrix side. Residues 16–34 (WPLTGALSALLMTSGLIMW) traverse the membrane as a helical segment. The Mitochondrial intermembrane segment spans residues 35-40 (FHFNST). A helical transmembrane segment spans residues 41–66 (ILLMLGLTTNMLTMYQWWRDIIREST). Topologically, residues 67-72 (FQGHHT) are mitochondrial matrix. Residues 73 to 105 (PTVQKGLRYGMILFIISEVLFFTGFFWAFYHSS) traverse the membrane as a helical segment. Over 106–128 (LAPTPELGGCWPPTGIHPLNPLE) the chain is Mitochondrial intermembrane. Residues 129 to 152 (VPLLNTSVLLASGVSITWAHHSLM) traverse the membrane as a helical segment. The Mitochondrial matrix segment spans residues 153-155 (EGN). A helical membrane pass occupies residues 156–183 (RNHMLQALFITIALGVYFTLLQASEYYE). Topologically, residues 184-190 (APFTISD) are mitochondrial intermembrane. The chain crosses the membrane as a helical span at residues 191–223 (GVYGSTFFVATGFHGLHVIIGSTFLIVCFFRQL). Over 224–232 (KFHFTSSHH) the chain is Mitochondrial matrix. The chain crosses the membrane as a helical span at residues 233 to 256 (FGFEAAAWYWHFVDVVWLFLYVSI). Topologically, residues 257–261 (YWWGS) are mitochondrial intermembrane.

The protein belongs to the cytochrome c oxidase subunit 3 family. In terms of assembly, component of the cytochrome c oxidase (complex IV, CIV), a multisubunit enzyme composed of 14 subunits. The complex is composed of a catalytic core of 3 subunits MT-CO1, MT-CO2 and MT-CO3, encoded in the mitochondrial DNA, and 11 supernumerary subunits COX4I, COX5A, COX5B, COX6A, COX6B, COX6C, COX7A, COX7B, COX7C, COX8 and NDUFA4, which are encoded in the nuclear genome. The complex exists as a monomer or a dimer and forms supercomplexes (SCs) in the inner mitochondrial membrane with NADH-ubiquinone oxidoreductase (complex I, CI) and ubiquinol-cytochrome c oxidoreductase (cytochrome b-c1 complex, complex III, CIII), resulting in different assemblies (supercomplex SCI(1)III(2)IV(1) and megacomplex MCI(2)III(2)IV(2)).

The protein localises to the mitochondrion inner membrane. The catalysed reaction is 4 Fe(II)-[cytochrome c] + O2 + 8 H(+)(in) = 4 Fe(III)-[cytochrome c] + 2 H2O + 4 H(+)(out). Its function is as follows. Component of the cytochrome c oxidase, the last enzyme in the mitochondrial electron transport chain which drives oxidative phosphorylation. The respiratory chain contains 3 multisubunit complexes succinate dehydrogenase (complex II, CII), ubiquinol-cytochrome c oxidoreductase (cytochrome b-c1 complex, complex III, CIII) and cytochrome c oxidase (complex IV, CIV), that cooperate to transfer electrons derived from NADH and succinate to molecular oxygen, creating an electrochemical gradient over the inner membrane that drives transmembrane transport and the ATP synthase. Cytochrome c oxidase is the component of the respiratory chain that catalyzes the reduction of oxygen to water. Electrons originating from reduced cytochrome c in the intermembrane space (IMS) are transferred via the dinuclear copper A center (CU(A)) of subunit 2 and heme A of subunit 1 to the active site in subunit 1, a binuclear center (BNC) formed by heme A3 and copper B (CU(B)). The BNC reduces molecular oxygen to 2 water molecules using 4 electrons from cytochrome c in the IMS and 4 protons from the mitochondrial matrix. The polypeptide is Cytochrome c oxidase subunit 3 (MT-CO3) (Aepyceros melampus (Impala)).